The primary structure comprises 241 residues: Lysoplasmalogenase TMEM86A (241 aa).

Residues 1 to 13 (MVSPVTVVKSEGP) are Cytoplasmic-facing. The helical transmembrane segment at 14-30 (KLVPFFKATCVYFVLWL) threads the bilayer. Residues 31 to 36 (PSSSPS) are Extracellular-facing. The chain crosses the membrane as a helical span at residues 37-59 (WVSALIKCLPIFCLWLFLLAHGV). The Cytoplasmic segment spans residues 60–67 (RFLLAHPS). A helical membrane pass occupies residues 68–87 (ASLIFVGLVFSAVGDAFLIW). The Extracellular segment spans residues 88-96 (QDHGYFEHG). Residues 97 to 113 (LLMFAVAHILYAAAFGM) traverse the membrane as a helical segment. The Cytoplasmic segment spans residues 114-119 (RPLALR). A helical membrane pass occupies residues 120-136 (TGLVIGVLSGLCYALLY). The Extracellular portion of the chain corresponds to 137-142 (PGLSGA). The chain crosses the membrane as a helical span at residues 143-159 (FTYLVGVYVALISFMGW). Residues 160-176 (RAMAGLRLVGAAWRWTE) lie on the Cytoplasmic side of the membrane. A helical membrane pass occupies residues 177-195 (LAAGGGALLFILSDLTIAL). Over 196 to 206 (NKFCFPVPYSR) the chain is Extracellular. The chain crosses the membrane as a helical span at residues 207–225 (ALIMSTYYAAQMLIALSAV). Over 226–241 (ESREPVGEDYRLSKAD) the chain is Cytoplasmic.

This sequence belongs to the TMEM86 family. Highly expressed in the jejunum, white adipose tissue, kidney and macrophages.

It is found in the endoplasmic reticulum membrane. It catalyses the reaction a 1-O-(1Z-alkenyl)-sn-glycero-3-phosphocholine + H2O = a 2,3-saturated aldehyde + sn-glycerol 3-phosphocholine. It carries out the reaction a 1-O-(1Z-alkenyl)-sn-glycero-3-phosphoethanolamine + H2O = a 2,3-saturated aldehyde + sn-glycero-3-phosphoethanolamine. In terms of biological role, catalyzes the hydrolysis of the vinyl ether bond of choline or ethanolamine lysoplasmalogens, forming fatty aldehyde and glycerophosphocholine or glycerophosphoethanolamine, respectively and is specific for the sn-2-deacylated (lyso) form of plasmalogen. Plays an important role in lysoplasmalogen metabolism in the adipocyte tissue and macrophages. This Mus musculus (Mouse) protein is Lysoplasmalogenase TMEM86A (Tmem86a).